Here is a 389-residue protein sequence, read N- to C-terminus: Probable acyl-CoA dehydrogenase fadE25 (389 aa).

Belongs to the acyl-CoA dehydrogenase family. The cofactor is FAD.

It carries out the reaction a 2,3-saturated acyl-CoA + A = a 2,3-dehydroacyl-CoA + AH2. The chain is Probable acyl-CoA dehydrogenase fadE25 (fadE25) from Mycobacterium bovis (strain ATCC BAA-935 / AF2122/97).